Reading from the N-terminus, the 174-residue chain is MNFNLFPLFAVEGGFGLNLNPLDTNLINLIIVIGVLFTFLRGFLGEMLERRRQAILANLSDAEQNLKNASVALNKAQLDLAEAQERAARILADGKTRAESIRVNSERRTIDAMAALKQDAIADLSAEMVRISEELRLQTALQAIEKAMVTLPTKLDETAHSKLIDQSIVNLEQA.

The chain crosses the membrane as a helical span at residues 26 to 46; the sequence is LINLIIVIGVLFTFLRGFLGE.

Belongs to the ATPase B chain family. As to quaternary structure, F-type ATPases have 2 components, F(1) - the catalytic core - and F(0) - the membrane proton channel. F(1) has five subunits: alpha(3), beta(3), gamma(1), delta(1), epsilon(1). F(0) has four main subunits: a(1), b(1), b'(1) and c(10-14). The alpha and beta chains form an alternating ring which encloses part of the gamma chain. F(1) is attached to F(0) by a central stalk formed by the gamma and epsilon chains, while a peripheral stalk is formed by the delta, b and b' chains.

It localises to the plastid. Its subcellular location is the organellar chromatophore thylakoid membrane. Its function is as follows. F(1)F(0) ATP synthase produces ATP from ADP in the presence of a proton or sodium gradient. F-type ATPases consist of two structural domains, F(1) containing the extramembraneous catalytic core and F(0) containing the membrane proton channel, linked together by a central stalk and a peripheral stalk. During catalysis, ATP synthesis in the catalytic domain of F(1) is coupled via a rotary mechanism of the central stalk subunits to proton translocation. In terms of biological role, component of the F(0) channel, it forms part of the peripheral stalk, linking F(1) to F(0). This Paulinella chromatophora protein is ATP synthase subunit b, organellar chromatophore.